Reading from the N-terminus, the 1409-residue chain is DNA-directed RNA polymerase subunit beta' (1409 aa).

4 residues coordinate Zn(2+): C70, C72, C85, and C88. Residues D460, D462, and D464 each contribute to the Mg(2+) site. C814, C888, C895, and C898 together coordinate Zn(2+).

This sequence belongs to the RNA polymerase beta' chain family. As to quaternary structure, the RNAP catalytic core consists of 2 alpha, 1 beta, 1 beta' and 1 omega subunit. When a sigma factor is associated with the core the holoenzyme is formed, which can initiate transcription. Mg(2+) is required as a cofactor. Zn(2+) serves as cofactor.

The catalysed reaction is RNA(n) + a ribonucleoside 5'-triphosphate = RNA(n+1) + diphosphate. In terms of biological role, DNA-dependent RNA polymerase catalyzes the transcription of DNA into RNA using the four ribonucleoside triphosphates as substrates. This chain is DNA-directed RNA polymerase subunit beta', found in Shewanella violacea.